The chain runs to 434 residues: Cytochrome b-c1 complex subunit 2, mitochondrial (434 aa).

A mitochondrion-targeting transit peptide spans 1 to 31; sequence MYSLNRLPRSAAFKSSANLLRRNASTTSAGG.

The protein belongs to the peptidase M16 family. UQCRC2/QCR2 subfamily. As to quaternary structure, component of the ubiquinol-cytochrome c oxidoreductase (cytochrome b-c1 complex, complex III, CIII), a multisubunit enzyme composed of 10 subunits. The complex is composed of 3 respiratory subunits cytochrome b (COB), cytochrome c1 (CYT1) and Rieske protein (RIP1), 2 core protein subunits COR1 and QCR2, and 5 low-molecular weight protein subunits QCR6, QCR7, QCR8, QCR9 and QCR10. The complex exists as an obligatory dimer and forms supercomplexes (SCs) in the inner mitochondrial membrane with a monomer or a dimer of cytochrome c oxidase (complex IV, CIV), resulting in 2 different assemblies (supercomplexes III(2)IV and III(2)IV(2)). Interacts with MRJ1.

It localises to the mitochondrion inner membrane. In terms of biological role, component of the ubiquinol-cytochrome c oxidoreductase, a multisubunit transmembrane complex that is part of the mitochondrial electron transport chain which drives oxidative phosphorylation. The respiratory chain contains 3 multisubunit complexes succinate dehydrogenase (complex II, CII), ubiquinol-cytochrome c oxidoreductase (cytochrome b-c1 complex, complex III, CIII) and cytochrome c oxidase (complex IV, CIV), that cooperate to transfer electrons derived from NADH and succinate to molecular oxygen, creating an electrochemical gradient over the inner membrane that drives transmembrane transport and the ATP synthase. The cytochrome b-c1 complex catalyzes electron transfer from ubiquinol to cytochrome c, linking this redox reaction to translocation of protons across the mitochondrial inner membrane, with protons being carried across the membrane as hydrogens on the quinol. In the process called Q cycle, 2 protons are consumed from the matrix, 4 protons are released into the intermembrane space and 2 electrons are passed to cytochrome c. The polypeptide is Cytochrome b-c1 complex subunit 2, mitochondrial (Cryptococcus neoformans var. grubii serotype A (strain H99 / ATCC 208821 / CBS 10515 / FGSC 9487) (Filobasidiella neoformans var. grubii)).